A 528-amino-acid polypeptide reads, in one-letter code: Major facilitator superfamily multidrug transporter mdr3 (528 aa).

The disordered stretch occupies residues 1 to 37 (MLAMAASAEETNRQSNAGRRSVISPSEAPPEAEQSDV). 7 helical membrane-spanning segments follow: residues 50–70 (FILI…YILI), 91–111 (WHVG…GKLG), 119–139 (ILVL…CSAF), 149–169 (ARAL…AIAG), 180–200 (MIFS…GVVG), 211–231 (WVMW…LWVI), and 241–261 (AATL…LLLL). N262 carries an N-linked (GlcNAc...) asparagine glycan. The next 5 helical transmembrane spans lie at 272–292 (GWST…LGLF), 340–360 (VITS…GCIL), 375–395 (FWSF…STTI), 410–430 (SLVN…AGTV), and 448–468 (ALWS…VFAV).

It belongs to the major facilitator superfamily.

The protein resides in the cell membrane. Major facilitator superfamily transporter that confers resistance to azoles such as itraconazole. This chain is Major facilitator superfamily multidrug transporter mdr3, found in Aspergillus fumigatus (strain ATCC MYA-4609 / CBS 101355 / FGSC A1100 / Af293) (Neosartorya fumigata).